The sequence spans 302 residues: Probable alpha-L-glutamate ligase 1 (302 aa).

An ATP-grasp domain is found at 104–287 (MQLLSRKGIG…VANMIIEFIE (184 aa)). ATP-binding positions include Lys-141, 178 to 179 (EY), Asp-187, and 211 to 213 (RSN). Mg(2+)-binding residues include Asp-248, Glu-260, and Asn-262. Mn(2+)-binding residues include Asp-248, Glu-260, and Asn-262.

Belongs to the RimK family. The cofactor is Mg(2+). Mn(2+) is required as a cofactor.

In Pseudoalteromonas atlantica (strain T6c / ATCC BAA-1087), this protein is Probable alpha-L-glutamate ligase 1.